Reading from the N-terminus, the 207-residue chain is Ras-related protein Rab7 (207 aa).

GTP-binding positions include 15–22 (GDSGVGKT), 63–67 (DTAGQ), and 125–128 (NKID). 2 S-geranylgeranyl cysteine lipidation sites follow: C205 and C207. At C207 the chain carries Cysteine methyl ester.

This sequence belongs to the small GTPase superfamily. Rab family.

It localises to the cell membrane. In terms of biological role, protein transport. Probably involved in vesicular traffic. This is Ras-related protein Rab7 from Prunus armeniaca (Apricot).